Reading from the N-terminus, the 71-residue chain is Antimicrobial peptide VpCT4 (71 aa).

An N-terminal signal peptide occupies residues 1-23 (MKTQFVILIVAIVILQLISQSEA). The residue at position 39 (leucine 39) is a Leucine amide. The propeptide occupies 40–71 (GKRGVQNMDQFDDIFEPELSEADLRYLQDLLR).

Belongs to the non-disulfide-bridged peptide (NDBP) superfamily. Short antimicrobial peptide (group 4) family. Expressed by the venom gland.

The protein resides in the secreted. It is found in the target cell membrane. In terms of biological role, antimicrobial peptide with potent activity against bacteria S.aureus (MIC=9.3 uM), weak activity against E.coli (MIC&gt;100 uM), and weak activity against pathogenic yeasts C.albicans (MIC=100 uM) and C.glabrata (MIC=100 uM). Is not very effective against P.aeruginosa (MIC&gt;300 uM). Also provokes high hemolysis on human erythrocytes (HC(50)=4.8 uM). This is Antimicrobial peptide VpCT4 from Mesomexovis punctatus (Scorpion).